The primary structure comprises 58 residues: Potassium channel toxin Ts16 (58 aa).

An N-terminal signal peptide occupies residues 1–16 (MHSSVFILILFSLAVI). 3 disulfide bridges follow: C29–C51, C34–C47, and C38–C53.

In terms of tissue distribution, expressed by the venom gland.

Its subcellular location is the secreted. Blocks potassium channels. In Tityus serrulatus (Brazilian scorpion), this protein is Potassium channel toxin Ts16.